The following is a 234-amino-acid chain: Orotidine 5'-phosphate decarboxylase (234 aa).

Residues aspartate 11, lysine 33, 60–69 (DLKFHDIPNT), threonine 120, arginine 181, glutamine 190, glycine 210, and arginine 211 contribute to the substrate site. Residue lysine 62 is the Proton donor of the active site.

It belongs to the OMP decarboxylase family. Type 1 subfamily. Homodimer.

The catalysed reaction is orotidine 5'-phosphate + H(+) = UMP + CO2. It functions in the pathway pyrimidine metabolism; UMP biosynthesis via de novo pathway; UMP from orotate: step 2/2. In terms of biological role, catalyzes the decarboxylation of orotidine 5'-monophosphate (OMP) to uridine 5'-monophosphate (UMP). This is Orotidine 5'-phosphate decarboxylase from Aliivibrio salmonicida (strain LFI1238) (Vibrio salmonicida (strain LFI1238)).